A 300-amino-acid polypeptide reads, in one-letter code: Cation-efflux pump FieF (300 aa).

4 consecutive transmembrane segments (helical) span residues 12–32 (AALS…FAWW), 40–60 (LAAL…LFVV), 82–102 (AALA…LTGF), and 114–134 (PSIG…LVTF). D45 and D49 together coordinate Zn(2+). The Zn(2+) site is built by H153 and D157. The next 2 membrane-spanning stretches (helical) occupy residues 155 to 175 (QSDV…WYGF) and 178 to 198 (ADAL…LRMG).

It belongs to the cation diffusion facilitator (CDF) transporter (TC 2.A.4) family. FieF subfamily. As to quaternary structure, homodimer.

The protein localises to the cell inner membrane. The enzyme catalyses Zn(2+)(in) + H(+)(out) = Zn(2+)(out) + H(+)(in). It catalyses the reaction Cd(2+)(in) + H(+)(out) = Cd(2+)(out) + H(+)(in). The catalysed reaction is Fe(2+)(in) + H(+)(out) = Fe(2+)(out) + H(+)(in). Divalent metal cation transporter which exports Zn(2+), Cd(2+) and possibly Fe(2+). May be involved in zinc and iron detoxification by efflux. The chain is Cation-efflux pump FieF from Yersinia pestis bv. Antiqua (strain Antiqua).